The sequence spans 152 residues: Superoxide dismutase [Cu-Zn] (152 aa).

3 residues coordinate Cu cation: H45, H47, and H62. A disulfide bond links C56 and C145. Zn(2+) is bound by residues H62, H70, H79, and D82. H119 contacts Cu cation.

It belongs to the Cu-Zn superoxide dismutase family. As to quaternary structure, homodimer. Requires Cu cation as cofactor. Zn(2+) is required as a cofactor.

It is found in the cytoplasm. It catalyses the reaction 2 superoxide + 2 H(+) = H2O2 + O2. Destroys radicals which are normally produced within the cells and which are toxic to biological systems. This chain is Superoxide dismutase [Cu-Zn] (SODCC), found in Brassica oleracea var. capitata (Cabbage).